Here is a 129-residue protein sequence, read N- to C-terminus: Phosphoribosyl-AMP cyclohydrolase (129 aa).

Asp-76 contacts Mg(2+). A Zn(2+)-binding site is contributed by Cys-77. Mg(2+) is bound by residues Asp-78 and Asp-80. The Zn(2+) site is built by Cys-97 and Cys-104.

This sequence belongs to the PRA-CH family. Homodimer. Mg(2+) is required as a cofactor. It depends on Zn(2+) as a cofactor.

It localises to the cytoplasm. The catalysed reaction is 1-(5-phospho-beta-D-ribosyl)-5'-AMP + H2O = 1-(5-phospho-beta-D-ribosyl)-5-[(5-phospho-beta-D-ribosylamino)methylideneamino]imidazole-4-carboxamide. The protein operates within amino-acid biosynthesis; L-histidine biosynthesis; L-histidine from 5-phospho-alpha-D-ribose 1-diphosphate: step 3/9. In terms of biological role, catalyzes the hydrolysis of the adenine ring of phosphoribosyl-AMP. This Verminephrobacter eiseniae (strain EF01-2) protein is Phosphoribosyl-AMP cyclohydrolase.